Consider the following 145-residue polypeptide: Small ribosomal subunit protein uS9 (145 aa).

This sequence belongs to the universal ribosomal protein uS9 family.

It is found in the cytoplasm. In Fritillaria agrestis (Stinkbells), this protein is Small ribosomal subunit protein uS9 (RPS16).